A 430-amino-acid polypeptide reads, in one-letter code: Nitroalkane oxidase (430 aa).

FAD is bound by residues 132-135 (LVFS), 140-142 (VAN), 170-172 (WAT), Arg301, Gln311, 372-376 (NAVGI), and 397-401 (IFDGG). The active-site Proton acceptor is Asp399.

It belongs to the acyl-CoA dehydrogenase family. Homotetramer. Requires FAD as cofactor.

The enzyme catalyses a primary nitroalkane + O2 + H2O = an aldehyde + nitrite + H2O2 + H(+). It catalyses the reaction a secondary nitroalkane + O2 + H2O = a ketone + nitrite + H2O2 + H(+). Its function is as follows. Nitroalkane oxidase (NAO) catalyzes the oxidation of nitroalkanes to the corresponding aldehydes or ketones with the release of nitrite and the consumption of molecular oxygen to yield hydrogen peroxide. NAO is unusual, since it catalyzes substrate oxidation by removing a substrate proton to form a carbanion intermediate. Prefers longer nitroalkanes, with 1-nitrohexane having the highest activity. This Podospora anserina (strain S / ATCC MYA-4624 / DSM 980 / FGSC 10383) (Pleurage anserina) protein is Nitroalkane oxidase.